We begin with the raw amino-acid sequence, 43 residues long: Photosystem I reaction center subunit IX (43 aa).

The helical transmembrane segment at 7-27 (YLSTAPVLSTIWFGSLAGLLI) threads the bilayer.

Belongs to the PsaJ family.

It localises to the plastid. The protein resides in the chloroplast thylakoid membrane. Its function is as follows. May help in the organization of the PsaE and PsaF subunits. In Vitis vinifera (Grape), this protein is Photosystem I reaction center subunit IX.